The sequence spans 248 residues: ATP synthase subunit a (248 aa).

A propeptide spans 1–3 (removed in mature form); the sequence is MLY. Helical transmembrane passes span 24–44, 86–106, 117–137, 146–166, 183–203, 205–225, and 227–247; these read MSLT…FFIF, IYMP…LVGL, FALP…IGFV, VLLP…VELL, ITSG…TSGI, LLFV…ELIV, and ILQA…SLIL.

The protein belongs to the ATPase A chain family. As to quaternary structure, F-type ATPases have 2 components, CF(1) - the catalytic core - and CF(0) - the membrane proton channel. CF(1) has five subunits: alpha(3), beta(3), gamma(1), delta(1), epsilon(1). CF(0) has three main subunits: a, b and c.

Its subcellular location is the mitochondrion inner membrane. Functionally, mitochondrial membrane ATP synthase (F(1)F(0) ATP synthase or Complex V) produces ATP from ADP in the presence of a proton gradient across the membrane which is generated by electron transport complexes of the respiratory chain. F-type ATPases consist of two structural domains, F(1) - containing the extramembraneous catalytic core and F(0) - containing the membrane proton channel, linked together by a central stalk and a peripheral stalk. During catalysis, ATP synthesis in the catalytic domain of F(1) is coupled via a rotary mechanism of the central stalk subunits to proton translocation. Key component of the proton channel; it may play a direct role in the translocation of protons across the membrane. This is ATP synthase subunit a from Zancudomyces culisetae (Gut fungus).